Here is a 129-residue protein sequence, read N- to C-terminus: Small ribosomal subunit protein bS6 (129 aa).

This sequence belongs to the bacterial ribosomal protein bS6 family.

Functionally, binds together with bS18 to 16S ribosomal RNA. This is Small ribosomal subunit protein bS6 from Microcystis aeruginosa (strain NIES-843 / IAM M-2473).